A 660-amino-acid polypeptide reads, in one-letter code: MPIQILPARLANQIAAGEVVERPASVVKELVENSIDAGATRIDIDIEKGGSKLIRIRDNGSGIPKDELTLALSRHATSKITSLDDLEAIVSLGFRGEALASISSVSRLTLTSRTVAQEEAWSAYAEGREMNVKLKPAAHPIGTTIDVVDLFFNTPARRKFLRADKTEFTHIDELLKRIALSRLDVTINLRHNGKMVRQYRAAQTKPQIEKRLAAVCGANFLQHALEVELEHGELKFHGWISSPEGARAQGDIQYCYVNGRMMKDKLINHAIRQGYESSLPANQYAAYILFIEINPHDVDVNVHPAKHEVRFHQARLVHDFIYQAIFGALQQGASLPDVVGHIQSEAEEQQLESKESYFPPMKEYVRQPQQTHYPKSEQLRAAVESTPSYPNKAPLDSWIPKGNVGSSSSNSTAPSRSFHTDKPTKKALSNYNELLTTQNREQRESTSQVNEQSHTFRSTQQIERVAPQVTQVSKNGITLGKVLSVVESTFALLQQGKQLQLLNLRYAEFVKIYGQLSSVNVEPLKPQPLLIPLSVGIDESICNNLSNYASLLKSLGIDLKVKNRTNIIVMAVCQPIRQQNLQQLIPNLLRYLEQINPSLEQVIKWLSHQIQHDEVSYTTAQAIQLVMELEQLWGDELNNFYPKLLKDIDITQVIQAFSHE.

Disordered stretches follow at residues 368–426 (PQQT…PTKK) and 439–461 (NREQ…STQQ). The span at 406-417 (SSSSNSTAPSRS) shows a compositional bias: low complexity.

This sequence belongs to the DNA mismatch repair MutL/HexB family.

Its function is as follows. This protein is involved in the repair of mismatches in DNA. It is required for dam-dependent methyl-directed DNA mismatch repair. May act as a 'molecular matchmaker', a protein that promotes the formation of a stable complex between two or more DNA-binding proteins in an ATP-dependent manner without itself being part of a final effector complex. The chain is DNA mismatch repair protein MutL from Aliivibrio fischeri (strain ATCC 700601 / ES114) (Vibrio fischeri).